Here is a 131-residue protein sequence, read N- to C-terminus: Profilin-3 (131 aa).

This sequence belongs to the profilin family. Occurs in many kinds of cells as a complex with monomeric actin in a 1:1 ratio.

Its subcellular location is the cytoplasm. The protein localises to the cytoskeleton. Its function is as follows. Binds to actin and affects the structure of the cytoskeleton. At high concentrations, profilin prevents the polymerization of actin, whereas it enhances it at low concentrations. By binding to PIP2, it inhibits the formation of IP3 and DG. This chain is Profilin-3 (PRO3), found in Triticum aestivum (Wheat).